A 470-amino-acid polypeptide reads, in one-letter code: MRPFKQSKFSLVWTQNDPQPRMPIAHMRNQNIVPQLVPWKRVTYWRRLMNSVSAFRNGSSLNISRKLSMMRKRHTIYTRSTNGYSLRKSKVLSVGGSHLKWSKSIERDSRKANEEATLAVAAYSKKESEKQSGQNNTSTASRNHLARERVFRFGSLRYKMDSSRRTLQRISDVDSPCSGPSENGKGVKRPFIPKRLVIGNEEYVRFGNGNQLVRDPKKRTRVLANEKVRWSLHNARLRLAKKKKYCQFFTRFGKCNKDDGKCPYVHDPSKIAVCTKFLNGLCANANCKLTHKVIPERMPDCSYYLQGLCNNEACPYRHVHVNPIAPICDGFLKGYCSEGDECRKKHSYNCPVFEATGSCSQGLKCKLHHPKNQSKGRKRKRTNEPSQKNARRRYFSSLHNILSESEPMVFNRRSTDSEVFGMESLDFITLGTAEYEAGDDNDPATVQSISSDSESLISIYNLITPVALMQ.

The disordered stretch occupies residues 122–144 (AYSKKESEKQSGQNNTSTASRNH). Residues 131-142 (QSGQNNTSTASR) are compositionally biased toward polar residues. C3H1-type zinc fingers lie at residues 240 to 269 (AKKKKYCQFFTRFGKCNKDDGKCPYVHDPS), 273 to 294 (VCTKFLNGLCANANCKLTHKVI), 295 to 321 (PERMPDCSYYLQGLCNNEACPYRHVHV), 322 to 349 (NPIAPICDGFLKGYCSEGDECRKKHSYN), and 350 to 372 (CPVFEATGSCSQGLKCKLHHPKN). The span at 370 to 381 (PKNQSKGRKRKR) shows a compositional bias: basic residues. Residues 370-389 (PKNQSKGRKRKRTNEPSQKN) form a disordered region.

Its function is as follows. Possesses RNA-binding and ribonuclease activities in vitro. In Arabidopsis thaliana (Mouse-ear cress), this protein is Zinc finger CCCH domain-containing protein 7.